The primary structure comprises 274 residues: tRNA-cytidine(32) 2-sulfurtransferase (274 aa).

The PP-loop motif signature appears at 40 to 45; the sequence is SGGKDS. Residues C115, C118, and C206 each contribute to the [4Fe-4S] cluster site.

This sequence belongs to the TtcA family. Homodimer. Mg(2+) serves as cofactor. Requires [4Fe-4S] cluster as cofactor.

It is found in the cytoplasm. It carries out the reaction cytidine(32) in tRNA + S-sulfanyl-L-cysteinyl-[cysteine desulfurase] + AH2 + ATP = 2-thiocytidine(32) in tRNA + L-cysteinyl-[cysteine desulfurase] + A + AMP + diphosphate + H(+). The protein operates within tRNA modification. Functionally, catalyzes the ATP-dependent 2-thiolation of cytidine in position 32 of tRNA, to form 2-thiocytidine (s(2)C32). The sulfur atoms are provided by the cysteine/cysteine desulfurase (IscS) system. The protein is tRNA-cytidine(32) 2-sulfurtransferase of Pseudomonas putida (strain GB-1).